The chain runs to 354 residues: Probable disease resistance protein At5g45490 (354 aa).

The stretch at 33–53 (AKGNLEKKRDDNEEEERLKTE) forms a coiled coil. Residues 45 to 122 (EEEERLKTES…VYAPRVWVSM (78 aa)) enclose the NB-ARC domain. 91–98 (GEYGVGKT) is a binding site for ATP. Residues 328–354 (DDEVGPVGSTHGQTDSSNRQPANQASS) are disordered. Polar residues predominate over residues 337 to 354 (THGQTDSSNRQPANQASS).

In terms of biological role, possible disease resistance protein. The polypeptide is Probable disease resistance protein At5g45490 (Arabidopsis thaliana (Mouse-ear cress)).